The chain runs to 535 residues: Flavin-containing monooxygenase iboF (535 aa).

A signal peptide spans Met-1–Ser-24. An FAD-binding site is contributed by Gly-60–Gly-65. Residues Asn-134, Asn-243, and Asn-300 are each glycosylated (N-linked (GlcNAc...) asparagine). Position 307-312 (Gly-307–Gly-312) interacts with NADP(+). Asn-356, Asn-382, and Asn-410 each carry an N-linked (GlcNAc...) asparagine glycan.

The protein belongs to the FMO family. The cofactor is FAD.

It functions in the pathway secondary metabolite biosynthesis. Its function is as follows. Flavin-containing monooxygenase; part of the gene cluster that mediates the biosynthesis of the psychoactive metabolites ibotenic acid and muscimol. The first committed step is glutamate hydroxylation by the 2-oxoglutarate-dependent dioxygenase iboH, and the last step is decarboxylation of ibotenic acid to muscimol by the decarboxylase iboD. The order of the intermediate reactions is somewhat ambiguous. IboA likely activates the carboxylic acid at position 5 to introduce an amide bond, and the flavin monooxygenase iboF generates the N-O bond. There are several options for the latter step. One option is that iboF directly hydroxylates the amide nitrogen formed by iboA to produce a hydroxamic acid species. Another option is that iboF hydroxylates an external N-containing compound, whose resulting N-O bond is subsequently introduced into the hydroxyglutamate scaffold. The paralogous PLP-dependent cystathionine gamma-synthase-like enzymes iboG1 and iboG2 are likely involved in substitution of the OH group at position 3 by the O-N moiety. The first cyclic intermediate is most probably tricholomic acid which is likely desaturated to ibotenic acid by the cytochrome P450 monooxygenase iboC. In Amanita muscaria (strain Koide BX008), this protein is Flavin-containing monooxygenase iboF.